A 147-amino-acid polypeptide reads, in one-letter code: 3-dehydroquinate dehydratase (147 aa).

The active-site Proton acceptor is Tyr22. Asn73, His79, and Asp86 together coordinate substrate. His99 (proton donor) is an active-site residue. Residues 100–101 and Arg110 each bind substrate; that span reads LS.

The protein belongs to the type-II 3-dehydroquinase family. Homododecamer.

It catalyses the reaction 3-dehydroquinate = 3-dehydroshikimate + H2O. It participates in metabolic intermediate biosynthesis; chorismate biosynthesis; chorismate from D-erythrose 4-phosphate and phosphoenolpyruvate: step 3/7. Its function is as follows. Catalyzes a trans-dehydration via an enolate intermediate. The chain is 3-dehydroquinate dehydratase from Synechococcus sp. (strain WH7803).